Here is a 227-residue protein sequence, read N- to C-terminus: Probable cytokinin riboside 5'-monophosphate phosphoribohydrolase LOGL9 (227 aa).

A compositionally biased stretch (polar residues) spans 1 to 15; the sequence is MYISSPHTSHFTSID. Residues 1 to 26 form a disordered region; it reads MYISSPHTSHFTSIDRSPAVVSESDR. Substrate-binding positions include Glu117, 135–136, and 152–158; these read RK and GYGTLEE.

The protein belongs to the LOG family. Expressed in roots, leaves and stems.

The catalysed reaction is N(6)-(dimethylallyl)adenosine 5'-phosphate + H2O = N(6)-dimethylallyladenine + D-ribose 5-phosphate. The enzyme catalyses 9-ribosyl-trans-zeatin 5'-phosphate + H2O = trans-zeatin + D-ribose 5-phosphate. Functionally, cytokinin-activating enzyme working in the direct activation pathway. Phosphoribohydrolase that converts inactive cytokinin nucleotides to the biologically active free-base forms. The protein is Probable cytokinin riboside 5'-monophosphate phosphoribohydrolase LOGL9 (LOGL9) of Oryza sativa subsp. japonica (Rice).